The primary structure comprises 509 residues: Lysine--tRNA ligase (509 aa).

Glu418 and Glu425 together coordinate Mg(2+).

It belongs to the class-II aminoacyl-tRNA synthetase family. In terms of assembly, homodimer. Mg(2+) is required as a cofactor.

Its subcellular location is the cytoplasm. The enzyme catalyses tRNA(Lys) + L-lysine + ATP = L-lysyl-tRNA(Lys) + AMP + diphosphate. The chain is Lysine--tRNA ligase (lysS) from Acinetobacter baylyi (strain ATCC 33305 / BD413 / ADP1).